Consider the following 261-residue polypeptide: NAD kinase (261 aa).

Residue Asp-54 is the Proton acceptor of the active site. NAD(+) is bound by residues 54 to 55 (DG), 123 to 124 (ND), Arg-150, Asp-152, and 163 to 168 (TAYSLS).

Belongs to the NAD kinase family. The cofactor is a divalent metal cation.

The protein resides in the cytoplasm. It catalyses the reaction NAD(+) + ATP = ADP + NADP(+) + H(+). Functionally, involved in the regulation of the intracellular balance of NAD and NADP, and is a key enzyme in the biosynthesis of NADP. Catalyzes specifically the phosphorylation on 2'-hydroxyl of the adenosine moiety of NAD to yield NADP. In Caldicellulosiruptor bescii (strain ATCC BAA-1888 / DSM 6725 / KCTC 15123 / Z-1320) (Anaerocellum thermophilum), this protein is NAD kinase.